Consider the following 253-residue polypeptide: tRNA pseudouridine synthase A (253 aa).

The active-site Nucleophile is D52. Y110 provides a ligand contact to substrate.

It belongs to the tRNA pseudouridine synthase TruA family. In terms of assembly, homodimer.

The catalysed reaction is uridine(38/39/40) in tRNA = pseudouridine(38/39/40) in tRNA. Functionally, formation of pseudouridine at positions 38, 39 and 40 in the anticodon stem and loop of transfer RNAs. The chain is tRNA pseudouridine synthase A from Thermus thermophilus (strain ATCC BAA-163 / DSM 7039 / HB27).